A 396-amino-acid chain; its full sequence is Lysophospholipid transporter LplT (396 aa).

The Periplasmic segment spans residues 1–17; the sequence is MSESVHTNTSLWSKGMK. A helical membrane pass occupies residues 18–38; it reads AVIVAQFLSAFGDNALLFATL. The Cytoplasmic portion of the chain corresponds to 39-52; it reads ALLKAQFYPEWSQP. Residues 53–73 form a helical membrane-spanning segment; it reads ILQMVFVGAYILLAPFVGQVA. Topologically, residues 74-90 are periplasmic; the sequence is DSFAKGRVMMFANGLKL. A helical transmembrane segment spans residues 91 to 111; the sequence is LGAASICFGINPFLGYTLVGV. At 112–144 the chain is on the cytoplasmic side; it reads GAAAYSPAKYGILGELTTGSKLVKANGLMEASA. A helical transmembrane segment spans residues 145–165; that stretch reads IAAILLGSVAGGVLADWHVLV. A topological domain (periplasmic) is located at residue A166. Residues 167-187 traverse the membrane as a helical segment; it reads LAACALAYGGAVVANIYIPKL. Over 188 to 225 the chain is Cytoplasmic; it reads AARPGQSWNLINMTRSFLNACTSLWCNGETRFSLVGAS. A helical transmembrane segment spans residues 226-246; the sequence is LFWGAGVTLRFLLVLWVPVAL. At 247–255 the chain is on the periplasmic side; it reads GITDNATPT. Residues 256-276 traverse the membrane as a helical segment; that stretch reads YLNAMVAIGIVVGAGAAAKLV. Topologically, residues 277 to 279 are cytoplasmic; it reads TLE. A helical transmembrane segment spans residues 280 to 300; it reads TVSRCMPAGILIGVVVLIFSL. The Periplasmic segment spans residues 301–303; that stretch reads QHE. The helical transmembrane segment at 304–324 threads the bilayer; the sequence is LLPAYALLMLIGVLGGFFVVP. Topologically, residues 325–342 are cytoplasmic; it reads LNALLQERGKKSVGAGNA. Residues 343–363 form a helical membrane-spanning segment; sequence IAVQNLGENSAMLLMLGIYSL. The Periplasmic portion of the chain corresponds to 364–365; sequence AV. Residues 366 to 386 traverse the membrane as a helical segment; it reads MVGIPVVPIGIGFGALFALAI. Residues 387 to 396 are Cytoplasmic-facing; the sequence is TALWIWQRRH.

The protein belongs to the major facilitator superfamily. LplT (TC 2.A.1.42) family.

It is found in the cell inner membrane. Its function is as follows. Catalyzes the facilitated diffusion of 2-acyl-glycero-3-phosphoethanolamine (2-acyl-GPE) into the cell. This chain is Lysophospholipid transporter LplT, found in Shigella flexneri serotype 5b (strain 8401).